We begin with the raw amino-acid sequence, 287 residues long: Cyclopropane mycolic acid synthase 1 (287 aa).

Residues 33–34 (YS), 68–76 (LLDVGCGWG), 94–99 (TLSKNQ), and 123–124 (WE) each bind S-adenosyl-L-methionine. Residue cysteine 269 is part of the active site.

Belongs to the CFA/CMAS family. Homodimer.

The protein localises to the cytoplasm. It carries out the reaction a 1-acyl-2-(9Z)-enoyl-sn-glycero-3-phospholipid + S-adenosyl-L-methionine = a 1-acyl-2-(9-cyclopronane)-acyl-sn-glycero-3-phospholipid + S-adenosyl-L-homocysteine + H(+). It functions in the pathway lipid metabolism; mycolic acid biosynthesis. Functionally, catalyzes the conversion of a double bond to a cyclopropane ring at the distal position of an alpha mycolic acid via the transfer of a methylene group from S-adenosyl-L-methionine. Cyclopropanated mycolic acids are key factors participating in cell envelope permeability, host immunomodulation and persistence. The chain is Cyclopropane mycolic acid synthase 1 (cmaA1) from Mycobacterium tuberculosis (strain CDC 1551 / Oshkosh).